Here is a 261-residue protein sequence, read N- to C-terminus: Trifolitoxin immunity protein (261 aa).

Its function is as follows. Required for TFX resistance. The polypeptide is Trifolitoxin immunity protein (tfxG) (Rhizobium leguminosarum bv. trifolii).